The primary structure comprises 213 residues: Thiopurine S-methyltransferase (213 aa).

S-adenosyl-L-methionine contacts are provided by W10, L45, E66, and R121.

This sequence belongs to the class I-like SAM-binding methyltransferase superfamily. TPMT family.

The protein resides in the cytoplasm. The catalysed reaction is S-adenosyl-L-methionine + a thiopurine = S-adenosyl-L-homocysteine + a thiopurine S-methylether.. The protein is Thiopurine S-methyltransferase of Aliivibrio fischeri (strain MJ11) (Vibrio fischeri).